Reading from the N-terminus, the 232-residue chain is 7-cyano-7-deazaguanine synthase (232 aa).

8-18 is an ATP binding site; the sequence is FSGGQDSTTCL. Zn(2+) contacts are provided by C188, C197, C200, and C203.

The protein belongs to the QueC family. Zn(2+) is required as a cofactor.

The enzyme catalyses 7-carboxy-7-deazaguanine + NH4(+) + ATP = 7-cyano-7-deazaguanine + ADP + phosphate + H2O + H(+). The protein operates within purine metabolism; 7-cyano-7-deazaguanine biosynthesis. In terms of biological role, catalyzes the ATP-dependent conversion of 7-carboxy-7-deazaguanine (CDG) to 7-cyano-7-deazaguanine (preQ(0)). The sequence is that of 7-cyano-7-deazaguanine synthase from Buchnera aphidicola subsp. Schizaphis graminum (strain Sg).